The primary structure comprises 511 residues: Phosphomethylpyrimidine synthase (511 aa).

Substrate contacts are provided by residues N127, M156, Y185, H221, 241-243, 282-285, and E321; these read SRG and DGLR. H325 is a Zn(2+) binding site. Y348 provides a ligand contact to substrate. H389 is a Zn(2+) binding site. Positions 469, 472, and 477 each coordinate [4Fe-4S] cluster. The interval 492–511 is disordered; sequence KGMEEKSEVTICNRKKESGK.

Belongs to the ThiC family. [4Fe-4S] cluster serves as cofactor.

It catalyses the reaction 5-amino-1-(5-phospho-beta-D-ribosyl)imidazole + S-adenosyl-L-methionine = 4-amino-2-methyl-5-(phosphooxymethyl)pyrimidine + CO + 5'-deoxyadenosine + formate + L-methionine + 3 H(+). It participates in cofactor biosynthesis; thiamine diphosphate biosynthesis. In terms of biological role, catalyzes the synthesis of the hydroxymethylpyrimidine phosphate (HMP-P) moiety of thiamine from aminoimidazole ribotide (AIR) in a radical S-adenosyl-L-methionine (SAM)-dependent reaction. The protein is Phosphomethylpyrimidine synthase of Leptospira borgpetersenii serovar Hardjo-bovis (strain JB197).